The chain runs to 275 residues: MKEKFFELKVLSRKSDVLKEFAFELGATCIEEIENGFILRDEDDLSNISWGLEEFAGRIGSDISTSLEIKDNIDWINEYKKGIKPVSSGKFYIRPSWEEQKDGFIDIIIDPALAFGSGHHESTSSCLNLISKYINLKECKIALDVGCGSGILSIALAKLGLAVDACDTDEQAVLSSTDNARKNGIKFNNIWTGSITDANGRYDVVVANIISDVILLLSKDLKMHVNNNGYLILSGILTKYKDRILQAFGDLELVWNITQNEWESFIFKNKDKNGK.

T123, G146, D167, and N208 together coordinate S-adenosyl-L-methionine.

This sequence belongs to the methyltransferase superfamily. PrmA family.

It localises to the cytoplasm. It carries out the reaction L-lysyl-[protein] + 3 S-adenosyl-L-methionine = N(6),N(6),N(6)-trimethyl-L-lysyl-[protein] + 3 S-adenosyl-L-homocysteine + 3 H(+). In terms of biological role, methylates ribosomal protein L11. The protein is Ribosomal protein L11 methyltransferase of Campylobacter fetus subsp. fetus (strain 82-40).